We begin with the raw amino-acid sequence, 303 residues long: D-alanine--D-alanine ligase (303 aa).

One can recognise an ATP-grasp domain in the interval K104–E300. I132–S187 serves as a coordination point for ATP. Mg(2+) is bound by residues D254, E267, and N269.

It belongs to the D-alanine--D-alanine ligase family. Mg(2+) serves as cofactor. Mn(2+) is required as a cofactor.

The protein resides in the cytoplasm. It carries out the reaction 2 D-alanine + ATP = D-alanyl-D-alanine + ADP + phosphate + H(+). It participates in cell wall biogenesis; peptidoglycan biosynthesis. In terms of biological role, cell wall formation. The chain is D-alanine--D-alanine ligase from Glaesserella parasuis serovar 5 (strain SH0165) (Haemophilus parasuis).